The sequence spans 151 residues: Large ribosomal subunit protein bL9 (151 aa).

It belongs to the bacterial ribosomal protein bL9 family.

Binds to the 23S rRNA. The protein is Large ribosomal subunit protein bL9 of Nitrosomonas europaea (strain ATCC 19718 / CIP 103999 / KCTC 2705 / NBRC 14298).